The chain runs to 50 residues: Photosystem II reaction center protein M (50 aa).

The chain crosses the membrane as a helical span at residues 6-26 (FGFVASLLFVGVPTIFLIGLF).

This sequence belongs to the PsbM family. In terms of assembly, PSII is composed of 1 copy each of membrane proteins PsbA, PsbB, PsbC, PsbD, PsbE, PsbF, PsbH, PsbI, PsbJ, PsbK, PsbL, PsbM, PsbT, PsbX, PsbY, Psb30/Ycf12, peripheral proteins PsbO, CyanoQ (PsbQ), PsbU, PsbV and a large number of cofactors. It forms dimeric complexes.

Its subcellular location is the cellular thylakoid membrane. Functionally, one of the components of the core complex of photosystem II (PSII). PSII is a light-driven water:plastoquinone oxidoreductase that uses light energy to abstract electrons from H(2)O, generating O(2) and a proton gradient subsequently used for ATP formation. It consists of a core antenna complex that captures photons, and an electron transfer chain that converts photonic excitation into a charge separation. This subunit is found at the monomer-monomer interface. The chain is Photosystem II reaction center protein M from Prochlorococcus marinus (strain MIT 9215).